Consider the following 302-residue polypeptide: Nucleotide-binding protein Strop_3101 (302 aa).

26–33 (GVSGGGRS) contacts ATP. Residue 77–80 (DVRS) participates in GTP binding.

This sequence belongs to the RapZ-like family.

Functionally, displays ATPase and GTPase activities. The protein is Nucleotide-binding protein Strop_3101 of Salinispora tropica (strain ATCC BAA-916 / DSM 44818 / JCM 13857 / NBRC 105044 / CNB-440).